A 153-amino-acid chain; its full sequence is Protein SprT-like (153 aa).

The SprT-like domain occupies 6–148 (LQQLTEQLSL…CGKCGGKIKE (143 aa)). A Zn(2+)-binding site is contributed by His-67. Glu-68 is a catalytic residue. His-71 serves as a coordination point for Zn(2+).

Belongs to the SprT family. Zn(2+) is required as a cofactor.

It is found in the cytoplasm. The polypeptide is Protein SprT-like (Bacillus licheniformis (strain ATCC 14580 / DSM 13 / JCM 2505 / CCUG 7422 / NBRC 12200 / NCIMB 9375 / NCTC 10341 / NRRL NRS-1264 / Gibson 46)).